The following is a 209-amino-acid chain: MAKTHEIKVERRADEGKGASRRLRHAGVIPAIVYGGELEPVSIQLNHEQIWLAQQNEWFYSSILDLNLNGDVQQVLLRDMQRHPFKQLIMHIDFQRVSANEKLSASVPLHFINEASSPAGKSSEVVVTHELNEVQVVCLPKDLPEFIEIDLSTLEVGAVIHLSEITLPAGVEIPELKLGKEHDVAVVIAKHGQVEADDVADEAAEGDAK.

The protein belongs to the bacterial ribosomal protein bL25 family. CTC subfamily. In terms of assembly, part of the 50S ribosomal subunit; part of the 5S rRNA/L5/L18/L25 subcomplex. Contacts the 5S rRNA. Binds to the 5S rRNA independently of L5 and L18.

Its function is as follows. This is one of the proteins that binds to the 5S RNA in the ribosome where it forms part of the central protuberance. This chain is Large ribosomal subunit protein bL25, found in Xanthomonas campestris pv. campestris (strain B100).